The primary structure comprises 1906 residues: Myosin light chain kinase, smooth muscle (1906 aa).

Ig-like C2-type domains lie at 28 to 117 (PAFT…VELT) and 156 to 244 (PKFA…AELT). 2 disordered regions span residues 127 to 157 (SLPSSAKTPGGRLSVPPVEHRPSIWGESPPK) and 309 to 453 (ETFY…SKVS). Over residues 309 to 321 (ETFYTSREAKDGK) the composition is skewed to basic and acidic residues. 2 stretches are compositionally biased toward polar residues: residues 345 to 354 (LQKTSSTITL) and 384 to 402 (PLMTTTTQENPSLTGQVSP). The span at 403–424 (RSRETENRAGVRKSVKEEKREP) shows a compositional bias: basic and acidic residues. 4 Ig-like C2-type domains span residues 429–517 (PQFE…WLLT), 521–613 (PKVE…AQVT), 637–725 (PIFL…ATLT), and 735–830 (PWFI…SSAS). The IIA-1 repeat unit spans residues 660–676 (VSANPCPEIIWLHNGKE). The interval 660–1833 (VSANPCPEII…EVMWYKDDQP (1174 aa)) is 4 X repeats, motif IIA. An IIB-1 repeat occupies 693–708 (SLYIQEVFPEDTGKYT). A 5 X repeats, motif IIB region spans residues 693–1866 (SLYIQEVFPE…VCGDDDAKYT (1174 aa)). An IIA-2 repeat occupies 758 to 774 (IAGDPFPTVHWFKDGQE). Residues 791 to 807 (TLILRNVQSRHAGQYEI) form an IIB-2 repeat. Disordered regions lie at residues 831-881 (RAEM…QEDV) and 947-1086 (PKTL…APSF). Composition is skewed to basic and acidic residues over residues 833–850 (EMLRDGRESASSGERRDG) and 867–881 (SSSETRAAEEEQEDV). The III-1 repeat unit spans residues 970 to 987 (AKKGTPKTPLPEKVPPPK). The segment at 970–1226 (AKKGTPKTPL…TPPKAATPPQ (257 aa)) is 4 X repeats, motif III. Pro residues predominate over residues 977–988 (TPLPEKVPPPKP). One copy of the III-2 repeat lies at 999–1016 (AKKKPPAENGSASTPAPN). Positions 1039–1051 (VKKEEKNDRKCEH) are enriched in basic and acidic residues. The stretch at 1061 to 1078 (IGKKAENKPAASKPTPPP) is one III-3 repeat. 2 consecutive Ig-like C2-type domains span residues 1084-1172 (PSFT…CKVL) and 1225-1313 (PQIT…VNLT). The stretch at 1107 to 1123 (ISSDPPASVSWTLDSKA) is one IIA-3 repeat. One copy of the IIB-3 repeat lies at 1140–1156 (SLTIEKVMPEDGGEYKC). Residues 1180-1227 (KAAKPAEKKTKKPKTTLPPVLSTESSEATVKKKPAPKTPPKAATPPQI) form a disordered region. The III-4 repeat unit spans residues 1209-1226 (VKKKPAPKTPPKAATPPQ). An IIB-4 repeat occupies 1281–1297 (KLTISSTKQEHCGCYTL). Residues 1317 to 1364 (KPDPPAGTPCASDIRSSSLTLSWYGSSYDGGSAVQSYTVEIWNSVDNK) form a motif IA region. Positions 1321–1414 (PAGTPCASDI…ESEVVKVGEK (94 aa)) constitute a Fibronectin type-III domain. The motif IB stretch occupies residues 1385–1402 (REYKFRVRAANVYGISEP). The interval 1414–1433 (KQEEELKEEEAELSDDEGKE) is disordered. Positions 1415 to 1432 (QEEELKEEEAELSDDEGK) are enriched in acidic residues. Positions 1453–1708 (YNIEERLGSG…CTQCLQHPWL (256 aa)) constitute a Protein kinase domain. Residues 1459–1467 (LGSGKFGQV) and Lys1482 contribute to the ATP site. Asp1574 acts as the Proton acceptor in catalysis. Residues 1700 to 1763 (TQCLQHPWLQ…SGMSGRKASG (64 aa)) form a calmodulin-binding region. Positions 1716-1728 (EAKKLSKDRMKKY) are calmodulin autoinhibition (AM13) region. Positions 1730 to 1749 (ARRKWQKTGHAVRAIGRLSS) are calmodulin recognition (RS20) region. Position 1762 is a phosphoserine; by PKG (Ser1762). Ser1768 bears the Phosphoserine; by MAPK mark. Positions 1794 to 1885 (PYFTKTILDM…ATCTAELLVE (92 aa)) constitute an Ig-like C2-type 9 domain. An IIA-4 repeat occupies 1817–1833 (IEGYPDPEVMWYKDDQP). The stretch at 1851–1866 (SLTISEVCGDDDAKYT) is one IIB-5 repeat. A disordered region spans residues 1885–1906 (ETMGKEGEGEGEGEEDEEEEEE). Acidic residues predominate over residues 1893–1906 (GEGEGEEDEEEEEE).

It belongs to the protein kinase superfamily. CAMK Ser/Thr protein kinase family. As to quaternary structure, all isoforms including Telokin bind calmodulin. The cofactor is Mg(2+). It depends on Ca(2+) as a cofactor. In terms of processing, the C-terminus is deglutamylated, leading to the formation of Myosin light chain kinase, smooth muscle, deglutamylated form. The C-terminus is variable, with one to five C-terminal glutamyl residues being removed producing five forms differring in their number of C-terminal glutamyl residues. Post-translationally, acetylated. Phosphorylation of telokin by PKG has no significant effect on its myosin binding activity, but promotes translocation to the membrane. In terms of tissue distribution, isoform telokin is expressed in gizzard, heart, lung, intestine, and skeletal muscle although the levels of the expression in the latter were much less than that in the gizzard.

It is found in the cytoplasm. The protein localises to the cytosol. The protein resides in the membrane. It catalyses the reaction L-seryl-[myosin light chain] + ATP = O-phospho-L-seryl-[myosin light chain] + ADP + H(+). The catalysed reaction is L-threonyl-[myosin light chain] + ATP = O-phospho-L-threonyl-[myosin light chain] + ADP + H(+). With respect to regulation, activated by phosphorylation on Tyr-478. Isoforms which lack this tyrosine residue are not regulated in this way. All catalytically active isoforms require binding to calcium and calmodulin for activation. Its function is as follows. Phosphorylates a specific serine in the N-terminus of a myosin light chain, which leads to the formation of calmodulin/MLCK signal transduction complexes which allow selective transduction of calcium signals. The polypeptide is Myosin light chain kinase, smooth muscle (Mylk) (Gallus gallus (Chicken)).